Here is a 150-residue protein sequence, read N- to C-terminus: MQVILLDKIANLGGLGDQVVVKSGFARNFLFPQGKAVPATKANIETFDARRAELEAKIADQLVAAQARADKLEALAEVTLVSKAGDEGKLFGSIGTRDIADAISAVGVEVAKSEVRLPLGTIRETGEFDVSIAVHSEVTATIKVIVIAEA.

The protein belongs to the bacterial ribosomal protein bL9 family.

In terms of biological role, binds to the 23S rRNA. The protein is Large ribosomal subunit protein bL9 of Pseudoalteromonas translucida (strain TAC 125).